The chain runs to 276 residues: Phospholipid phosphatase 2 (276 aa).

The Cytoplasmic segment spans residues 1–4; sequence MERR. The helical transmembrane segment at 5–25 threads the bilayer; it reads WVFVLLDVLCVLVASLPFIIL. Residues 26-51 are Lumenal-facing; the sequence is TLVNAPYKRGFYCGDDSIRYPYRPDT. Residues 52–72 form a helical membrane-spanning segment; it reads ITHGLMAGVIITATVILVSLG. The Cytoplasmic portion of the chain corresponds to 73 to 87; sequence EAYLVYTDRLYSRSN. The chain crosses the membrane as a helical span at residues 88–108; that stretch reads FNNYVAAIYKVLGTFLFGAAV. The Lumenal segment spans residues 109-161; the sequence is SQSLTDLAKYMIGRLRPSFLAVCDPDWSQVNCSGYVQLEVCRGSPANVTEARL. The tract at residues 117-125 is phosphatase sequence motif I; the sequence is KYMIGRLRP. N-linked (GlcNAc...) asparagine glycosylation is found at N139 and N155. A helical membrane pass occupies residues 162 to 182; it reads SFYSGHSSFGMYCMLFLALYV. A phosphatase sequence motif II region spans residues 164-167; it reads YSGH. The active-site Proton donors is the H167. Over 183–189 the chain is Cytoplasmic; sequence QARLCWK. Residues 190–210 traverse the membrane as a helical segment; the sequence is WARLLRPTVQFFLVAFAIYVG. Residues 211 to 218 are Lumenal-facing; the sequence is YTRVSDHK. The phosphatase sequence motif III stretch occupies residues 212–223; that stretch reads TRVSDHKHHWSD. H219 serves as the catalytic Nucleophile. Residues 219-239 form a helical membrane-spanning segment; sequence HHWSDVLVGLLQGALVACLTV. The Cytoplasmic segment spans residues 240–276; sequence RYVSDFFKSRPPQPCQEDEVPERKPSLSLTLTLGDRP. The interval 251–276 is disordered; the sequence is PQPCQEDEVPERKPSLSLTLTLGDRP.

It belongs to the PA-phosphatase related phosphoesterase family. In terms of assembly, forms functional homodimers and homooligomers. Can also form heterooligomers with PLPP1 and PLPP3. In terms of processing, N-glycosylated. In terms of tissue distribution, expressed at high levels in lung, liver and kidney; at low levels in heart and brain, and was not detected in skeletal muscle.

The protein localises to the membrane. Its subcellular location is the cell membrane. The protein resides in the early endosome membrane. It is found in the endoplasmic reticulum membrane. The enzyme catalyses a 1,2-diacyl-sn-glycero-3-phosphate + H2O = a 1,2-diacyl-sn-glycerol + phosphate. It carries out the reaction 1,2-dihexadecanoyl-sn-glycero-3-phosphate + H2O = 1,2-dihexadecanoyl-sn-glycerol + phosphate. The catalysed reaction is 1,2-di-(9Z-octadecenoyl)-sn-glycero-3-phosphate + H2O = 1,2-di-(9Z-octadecenoyl)-sn-glycerol + phosphate. It catalyses the reaction a monoacyl-sn-glycero-3-phosphate + H2O = a monoacylglycerol + phosphate. The enzyme catalyses (9Z)-octadecenoyl-sn-glycero-3-phosphate + H2O = (9Z-octadecenoyl)-glycerol + phosphate. It carries out the reaction sphing-4-enine 1-phosphate + H2O = sphing-4-enine + phosphate. The catalysed reaction is an N-acylsphing-4-enine 1-phosphate + H2O = an N-acylsphing-4-enine + phosphate. It catalyses the reaction N-(octanoyl)-sphing-4-enine-1-phosphate + H2O = N-octanoylsphing-4-enine + phosphate. The enzyme catalyses N-(9Z-octadecenoyl)-ethanolamine phosphate + H2O = N-(9Z-octadecenoyl) ethanolamine + phosphate. The protein operates within lipid metabolism; phospholipid metabolism. With respect to regulation, magnesium-independent phospholipid phosphatase. Insensitive to N-ethylmaleimide. Functionally, magnesium-independent phospholipid phosphatase that catalyzes the dephosphorylation of a variety of glycerolipid and sphingolipid phosphate esters including phosphatidate/PA, lysophosphatidate/LPA, sphingosine 1-phosphate/S1P and ceramide 1-phosphate/C1P. Has no apparent extracellular phosphatase activity and therefore most probably acts intracellularly. Also acts on N-oleoyl ethanolamine phosphate/N-(9Z-octadecenoyl)-ethanolamine phosphate, a potential physiological compound. Through dephosphorylation of these bioactive lipid mediators produces new bioactive compounds and may regulate signal transduction in different cellular processes. Indirectly regulates, for instance, cell cycle G1/S phase transition through its phospholipid phosphatase activity. The protein is Phospholipid phosphatase 2 of Mus musculus (Mouse).